Reading from the N-terminus, the 419-residue chain is Histidine--tRNA ligase (419 aa).

This sequence belongs to the class-II aminoacyl-tRNA synthetase family. As to quaternary structure, homodimer.

It is found in the cytoplasm. It catalyses the reaction tRNA(His) + L-histidine + ATP = L-histidyl-tRNA(His) + AMP + diphosphate + H(+). The polypeptide is Histidine--tRNA ligase (Halothermothrix orenii (strain H 168 / OCM 544 / DSM 9562)).